Here is a 147-residue protein sequence, read N- to C-terminus: Peptide methionine sulfoxide reductase MsrB (147 aa).

The span at 1-11 (MPKIVKKEPKF) shows a compositional bias: basic and acidic residues. The tract at residues 1–25 (MPKIVKKEPKFVEQSGKKVTKSDEQ) is disordered. The MsrB domain maps to 23 to 145 (DEQWREQLSD…NSVSLIFNKS (123 aa)). Residues Cys-62, Cys-65, Cys-111, and Cys-114 each contribute to the Zn(2+) site. Residue Cys-134 is the Nucleophile of the active site.

Belongs to the MsrB Met sulfoxide reductase family. Requires Zn(2+) as cofactor.

It carries out the reaction L-methionyl-[protein] + [thioredoxin]-disulfide + H2O = L-methionyl-(R)-S-oxide-[protein] + [thioredoxin]-dithiol. The sequence is that of Peptide methionine sulfoxide reductase MsrB from Vibrio parahaemolyticus serotype O3:K6 (strain RIMD 2210633).